The primary structure comprises 807 residues: Nucleolar complex protein 3 homolog (807 aa).

Disordered regions lie at residues 27–93 (KLKN…DMMD) and 167–191 (EKPVTDVQQEEEAEEELEDEEEVIE). The span at 40 to 51 (KKYRKEQRKLRQ) shows a compositional bias: basic residues. Residues 52 to 78 (AVKDAVSKKPIPLEDPKSKRPVKRMER) are compositionally biased toward basic and acidic residues. Acidic residues-rich tracts occupy residues 79–93 (EEDEEEEALPLDMMD) and 174–190 (QQEEEAEEELEDEEEVI). A Glycyl lysine isopeptide (Lys-Gly) (interchain with G-Cter in SUMO2) cross-link involves residue lysine 332. Positions 449 to 489 (FKEKRKTLSRMQRKWKKAEEKLERELREAEASESTEKKLKL) form a coiled coil.

It belongs to the CBF/MAK21 family.

The protein resides in the nucleus. It localises to the nucleolus. Its subcellular location is the nucleus speckle. Its function is as follows. May be required for adipogenesis. The sequence is that of Nucleolar complex protein 3 homolog (Noc3l) from Mus musculus (Mouse).